A 378-amino-acid polypeptide reads, in one-letter code: 1-acyl-sn-glycerol-3-phosphate acyltransferase delta (378 aa).

Residues 11 to 31 (FLCHLVFCYVFIASGLIVNAI) form a helical membrane-spanning segment. Positions 96–101 (HKFEID) match the HXXXXD motif motif. 3 helical membrane-spanning segments follow: residues 125–145 (ELAY…IFCT), 311–331 (WLFW…SMVS), and 338–358 (LASL…MIGV).

It belongs to the 1-acyl-sn-glycerol-3-phosphate acyltransferase family. Expressed at a high levels in the brain, at intermediate or low levels in skeletal muscles, gut, kidney, spleen and lung. Barely detectable in heart and liver.

The protein localises to the endoplasmic reticulum membrane. It carries out the reaction a 1-acyl-sn-glycero-3-phosphate + an acyl-CoA = a 1,2-diacyl-sn-glycero-3-phosphate + CoA. The enzyme catalyses (4Z,7Z,10Z,13Z,16Z,19Z)-docosahexaenoyl-CoA + 1-hexadecanoyl-sn-glycero-3-phosphate = 1-hexadecanoyl-2-(4Z,7Z,10Z,13Z,16Z,19Z-docosahexaenoyl)-sn-glycero-3-phosphate + CoA. It catalyses the reaction 1-octadecanoyl-sn-glycero-3-phosphate + (9Z,12Z)-octadecadienoyl-CoA = 1-octadecanoyl-2-(9Z,12Z-octadecadienoyl)-sn-glycero-3-phosphate + CoA. The catalysed reaction is 1-octadecanoyl-sn-glycero-3-phosphate + (4Z,7Z,10Z,13Z,16Z,19Z)-docosahexaenoyl-CoA = 1-octadecanoyl-2-(4Z,7Z,10Z,13Z,16Z,19Z-docosahexaenoyl)-sn-glycero-3-phosphate + CoA. It carries out the reaction (4Z,7Z,10Z,13Z,16Z,19Z)-docosahexaenoyl-CoA + 1-(9Z-octadecenoyl)-sn-glycero-3-phosphate = 1-(9Z-octadecenoyl)-2-(4Z,7Z,10Z,13Z,16Z,19Z-docosahexaenoyl)-sn-glycero-3-phosphate + CoA. It participates in phospholipid metabolism; CDP-diacylglycerol biosynthesis; CDP-diacylglycerol from sn-glycerol 3-phosphate: step 2/3. Its function is as follows. Converts 1-acyl-sn-glycerol-3-phosphate (lysophosphatidic acid or LPA) into 1,2-diacyl-sn-glycerol-3-phosphate (phosphatidic acid or PA) by incorporating an acyl moiety at the sn-2 position of the glycerol backbone. Exhibits high acyl-CoA specificity for polyunsaturated fatty acyl-CoA, especially docosahexaenoyl-CoA (22:6-CoA, DHA-CoA). This chain is 1-acyl-sn-glycerol-3-phosphate acyltransferase delta (Agpat4), found in Mus musculus (Mouse).